A 120-amino-acid polypeptide reads, in one-letter code: Ribosome-binding factor A (120 aa).

It belongs to the RbfA family. In terms of assembly, monomer. Binds 30S ribosomal subunits, but not 50S ribosomal subunits or 70S ribosomes.

Its subcellular location is the cytoplasm. Its function is as follows. One of several proteins that assist in the late maturation steps of the functional core of the 30S ribosomal subunit. Associates with free 30S ribosomal subunits (but not with 30S subunits that are part of 70S ribosomes or polysomes). Required for efficient processing of 16S rRNA. May interact with the 5'-terminal helix region of 16S rRNA. The chain is Ribosome-binding factor A from Chlamydia abortus (strain DSM 27085 / S26/3) (Chlamydophila abortus).